A 107-amino-acid polypeptide reads, in one-letter code: MKRTNKIKGTLERPRLSVFRSNCHIYAQVIDDSSGMTIVSTSTLDKDVKSLLNNTSTCEASKIVGQVIAKKTLARNIKQVIFDRGKRVYHGRISALAEAARESGLEF.

It belongs to the universal ribosomal protein uL18 family. In terms of assembly, part of the 50S ribosomal subunit; contacts the 5S rRNA.

The protein localises to the plastid. Its subcellular location is the chloroplast. Functionally, binds 5S rRNA, forms part of the central protuberance of the 50S subunit. This Guillardia theta (Cryptophyte) protein is Large ribosomal subunit protein uL18c (rpl18).